Reading from the N-terminus, the 436-residue chain is UDP-N-acetylmuramate--L-alanine ligase (436 aa).

ATP is bound at residue glycine 108–serine 114.

This sequence belongs to the MurCDEF family.

It localises to the cytoplasm. It catalyses the reaction UDP-N-acetyl-alpha-D-muramate + L-alanine + ATP = UDP-N-acetyl-alpha-D-muramoyl-L-alanine + ADP + phosphate + H(+). The protein operates within cell wall biogenesis; peptidoglycan biosynthesis. Cell wall formation. The protein is UDP-N-acetylmuramate--L-alanine ligase of Bacillus cereus (strain ZK / E33L).